A 335-amino-acid polypeptide reads, in one-letter code: 2-acylglycerol O-acyltransferase 2-A (335 aa).

2 helical membrane passes run 24-44 (WVFSFLALAQTCILLFFVLLF) and 47-67 (FWIISVVYGVWWFLDWDTPSK).

It belongs to the diacylglycerol acyltransferase family.

It is found in the endoplasmic reticulum membrane. It localises to the cytoplasm. The protein localises to the perinuclear region. It carries out the reaction a 2-acylglycerol + an acyl-CoA = a 1,2-diacylglycerol + CoA. The catalysed reaction is a 2-acylglycerol + an acyl-CoA = a 1,2-diacyl-sn-glycerol + CoA. The enzyme catalyses a 2-acylglycerol + an acyl-CoA = a 2,3-diacyl-sn-glycerol + CoA. It catalyses the reaction a 1-acylglycerol + an acyl-CoA = a 1,2-diacylglycerol + CoA. It carries out the reaction a 1-acylglycerol + an acyl-CoA = a 1,3-diacylglycerol + CoA. The catalysed reaction is 1-O-alkylglycerol + an acyl-CoA = 1-O-alkyl-3-acylglycerol + CoA. The enzyme catalyses an acyl-CoA + a 1,2-diacyl-sn-glycerol = a triacyl-sn-glycerol + CoA. The protein operates within glycerolipid metabolism; triacylglycerol biosynthesis. In terms of biological role, catalyzes the formation of diacylglycerol from 2-monoacylglycerol and fatty acyl-CoA. Involved in glycerolipid synthesis and lipid metabolism. Catalyzes the formation of diacylglycerol, the precursor of triacylglycerol, by transferring the acyl chain of a fatty acyl-CoA to a monoacylglycerol. Plays a central role in absorption of dietary fat in the small intestine by catalyzing the resynthesis of triacylglycerol in enterocytes. Has a preference toward monoacylglycerols containing unsaturated fatty acids in an order of C18:3 &gt; C18:2 &gt; C18:1 &gt; C18:0 at sn-2. Able to use 1-monoalkylglycerol (1-MAkG, 1-O-alkylglycerol) as an acyl acceptor for the synthesis of monoalkyl-monoacylglycerol (MAMAG, 1-O-alkyl-3-acylglycerol or 1-O-alkyl-2-acylglycerol) and subsequently, with lower efficiency, may add another acyl chain producing monoalkyl-diacylglycerol (MADAG, 1-O-alkyl-2,3-diacylglycerol). Possesses weak but significant activity with diacylglycerol as substrate, producing triacylglycerol (triacyl-sn-glycerol). This chain is 2-acylglycerol O-acyltransferase 2-A (mogat2-a), found in Xenopus laevis (African clawed frog).